The following is a 441-amino-acid chain: Ribosomal protein uS12 methylthiotransferase RimO (441 aa).

An MTTase N-terminal domain is found at 6–116; the sequence is PKVGFVSLGC…VMTAVHANLP (111 aa). Positions 15, 51, 80, 147, 151, and 154 each coordinate [4Fe-4S] cluster. A Radical SAM core domain is found at 133–370; the sequence is LTPQHYAYLK…MEVQESISAE (238 aa). A TRAM domain is found at 373-439; it reads RRKIGRIETV…GHDLWAAPPA (67 aa).

Belongs to the methylthiotransferase family. RimO subfamily. Requires [4Fe-4S] cluster as cofactor.

The protein resides in the cytoplasm. The catalysed reaction is L-aspartate(89)-[ribosomal protein uS12]-hydrogen + (sulfur carrier)-SH + AH2 + 2 S-adenosyl-L-methionine = 3-methylsulfanyl-L-aspartate(89)-[ribosomal protein uS12]-hydrogen + (sulfur carrier)-H + 5'-deoxyadenosine + L-methionine + A + S-adenosyl-L-homocysteine + 2 H(+). Its function is as follows. Catalyzes the methylthiolation of an aspartic acid residue of ribosomal protein uS12. This Methylobacillus flagellatus (strain ATCC 51484 / DSM 6875 / VKM B-1610 / KT) protein is Ribosomal protein uS12 methylthiotransferase RimO.